The following is a 245-amino-acid chain: Ribonuclease PH (245 aa).

Phosphate-binding positions include Arg-86 and 124 to 126 (GTR).

Belongs to the RNase PH family. Homohexameric ring arranged as a trimer of dimers.

It carries out the reaction tRNA(n+1) + phosphate = tRNA(n) + a ribonucleoside 5'-diphosphate. Its function is as follows. Phosphorolytic 3'-5' exoribonuclease that plays an important role in tRNA 3'-end maturation. Removes nucleotide residues following the 3'-CCA terminus of tRNAs; can also add nucleotides to the ends of RNA molecules by using nucleoside diphosphates as substrates, but this may not be physiologically important. Probably plays a role in initiation of 16S rRNA degradation (leading to ribosome degradation) during starvation. The chain is Ribonuclease PH from Bacillus cytotoxicus (strain DSM 22905 / CIP 110041 / 391-98 / NVH 391-98).